The sequence spans 240 residues: Phosphoribosylaminoimidazole-succinocarboxamide synthase (240 aa).

Belongs to the SAICAR synthetase family.

The catalysed reaction is 5-amino-1-(5-phospho-D-ribosyl)imidazole-4-carboxylate + L-aspartate + ATP = (2S)-2-[5-amino-1-(5-phospho-beta-D-ribosyl)imidazole-4-carboxamido]succinate + ADP + phosphate + 2 H(+). It participates in purine metabolism; IMP biosynthesis via de novo pathway; 5-amino-1-(5-phospho-D-ribosyl)imidazole-4-carboxamide from 5-amino-1-(5-phospho-D-ribosyl)imidazole-4-carboxylate: step 1/2. The protein is Phosphoribosylaminoimidazole-succinocarboxamide synthase of Coxiella burnetii (strain RSA 493 / Nine Mile phase I).